A 134-amino-acid chain; its full sequence is MGRDTIAEVLTVIRNANMDGKKMVKIPSSNITENIIKLLLREGFLENVRKHYENGNYFLVLTLRHQKTKKGPVTNILNLKQISRPGRRIYSMSKKIPRILGGIGIVILSTSHGILTDREARLEGIGGEILCYIW.

This sequence belongs to the universal ribosomal protein uS8 family. Part of the 30S ribosomal subunit.

It localises to the plastid. Its function is as follows. One of the primary rRNA binding proteins, it binds directly to 16S rRNA central domain where it helps coordinate assembly of the platform of the 30S subunit. The polypeptide is Small ribosomal subunit protein uS8c (rps8) (Cuscuta gronovii (Common dodder)).